The primary structure comprises 187 residues: Plasmodium-specific hydrophobic abundant protein (187 aa).

A signal peptide spans 1 to 18 (MMKYVFVALCLFAVVALA).

To HAP-S protein.

The protein localises to the membrane. This chain is Plasmodium-specific hydrophobic abundant protein, found in Physarum polycephalum (Slime mold).